We begin with the raw amino-acid sequence, 422 residues long: Ferrochelatase, mitochondrial (422 aa).

The N-terminal 53 residues, 1–53, are a transit peptide targeting the mitochondrion; it reads MLSASANMAAALRAAGALLREPLVHGSSRACQPWRCQSGAAVAATTEKVHHAK. Lys-56 bears the N6-acetyllysine mark. Protoporphyrin IX contacts are provided by Arg-114, Tyr-122, and Ser-129. N6-succinyllysine is present on Lys-137. Position 195 (Cys-195) interacts with [2Fe-2S] cluster. His-229 is an active-site residue. Residue Lys-289 is modified to N6-acetyllysine; alternate. An N6-succinyllysine; alternate modification is found at Lys-289. Asp-382 is an active-site residue. Positions 402, 405, and 410 each coordinate [2Fe-2S] cluster. Lys-414 bears the N6-acetyllysine; alternate mark. Lys-414 is modified (N6-succinyllysine; alternate).

The protein belongs to the ferrochelatase family. Homodimer. Homotetramer. Interaction with PGRMC1; the interaction results in decreased FECH activity. Interacts with ABCB10 and SLC25A37; this interaction forms an oligomeric complex. Forms a complex with ABCB7 and ABCB10, where a dimeric FECH bridges ABCB7 and ABCB10 homodimers; this complex may be required for cellular iron homeostasis, mitochondrial function and heme biosynthesis. Interacts with ABCB7 and ABCB10. It depends on [2Fe-2S] cluster as a cofactor. Erythroid and hepatic cells.

Its subcellular location is the mitochondrion inner membrane. It catalyses the reaction heme b + 2 H(+) = protoporphyrin IX + Fe(2+). The protein operates within porphyrin-containing compound metabolism; protoheme biosynthesis; protoheme from protoporphyrin-IX: step 1/1. Catalyzes the ferrous insertion into protoporphyrin IX. This chain is Ferrochelatase, mitochondrial, found in Mus musculus (Mouse).